A 150-amino-acid polypeptide reads, in one-letter code: Flagellar assembly factor FliW (150 aa).

It belongs to the FliW family. In terms of assembly, interacts with translational regulator CsrA and flagellin(s).

It is found in the cytoplasm. Acts as an anti-CsrA protein, binds CsrA and prevents it from repressing translation of its target genes, one of which is flagellin. Binds to flagellin and participates in the assembly of the flagellum. This chain is Flagellar assembly factor FliW, found in Leptospira interrogans serogroup Icterohaemorrhagiae serovar Lai (strain 56601).